Consider the following 222-residue polypeptide: 2-C-methyl-D-erythritol 4-phosphate cytidylyltransferase (222 aa).

This sequence belongs to the IspD/TarI cytidylyltransferase family. IspD subfamily.

The enzyme catalyses 2-C-methyl-D-erythritol 4-phosphate + CTP + H(+) = 4-CDP-2-C-methyl-D-erythritol + diphosphate. The protein operates within isoprenoid biosynthesis; isopentenyl diphosphate biosynthesis via DXP pathway; isopentenyl diphosphate from 1-deoxy-D-xylulose 5-phosphate: step 2/6. Its function is as follows. Catalyzes the formation of 4-diphosphocytidyl-2-C-methyl-D-erythritol from CTP and 2-C-methyl-D-erythritol 4-phosphate (MEP). This Thermotoga neapolitana (strain ATCC 49049 / DSM 4359 / NBRC 107923 / NS-E) protein is 2-C-methyl-D-erythritol 4-phosphate cytidylyltransferase.